The sequence spans 473 residues: Ribulose bisphosphate carboxylase large chain (473 aa).

Substrate contacts are provided by Asn116 and Thr166. Lys168 (proton acceptor) is an active-site residue. Lys170 contacts substrate. Positions 194, 196, and 197 each coordinate Mg(2+). Position 194 is an N6-carboxylysine (Lys194). The active-site Proton acceptor is the His287. Residues Arg288, His320, and Ser372 each contribute to the substrate site.

This sequence belongs to the RuBisCO large chain family. Type I subfamily. In terms of assembly, heterohexadecamer of 8 large chains and 8 small chains. It depends on Mg(2+) as a cofactor.

The catalysed reaction is 2 (2R)-3-phosphoglycerate + 2 H(+) = D-ribulose 1,5-bisphosphate + CO2 + H2O. It carries out the reaction D-ribulose 1,5-bisphosphate + O2 = 2-phosphoglycolate + (2R)-3-phosphoglycerate + 2 H(+). In terms of biological role, ruBisCO catalyzes two reactions: the carboxylation of D-ribulose 1,5-bisphosphate, the primary event in carbon dioxide fixation, as well as the oxidative fragmentation of the pentose substrate. Both reactions occur simultaneously and in competition at the same active site. In Cupriavidus metallidurans (strain ATCC 43123 / DSM 2839 / NBRC 102507 / CH34) (Ralstonia metallidurans), this protein is Ribulose bisphosphate carboxylase large chain.